Consider the following 104-residue polypeptide: Large ribosomal subunit protein uL23 (104 aa).

It belongs to the universal ribosomal protein uL23 family. Part of the 50S ribosomal subunit. Contacts protein L29, and trigger factor when it is bound to the ribosome.

In terms of biological role, one of the early assembly proteins it binds 23S rRNA. One of the proteins that surrounds the polypeptide exit tunnel on the outside of the ribosome. Forms the main docking site for trigger factor binding to the ribosome. In Paraburkholderia phymatum (strain DSM 17167 / CIP 108236 / LMG 21445 / STM815) (Burkholderia phymatum), this protein is Large ribosomal subunit protein uL23.